The chain runs to 249 residues: Superoxide dismutase 1 copper chaperone (249 aa).

The 64-residue stretch at 6–69 (TYEATYAIPM…TLRNCGKDAI (64 aa)) folds into the HMA domain. Zn(2+) is bound at residue His16. Cu cation contacts are provided by Cys17 and Cys20. A disulfide bridge connects residues Cys27 and Cys64. Residues Cys229 and Cys231 each coordinate Cu cation.

The protein belongs to the CCS1 family. As to quaternary structure, homodimer, and heterodimer with apo-SOD1. Zinc-binding at His-16 of CCS1 and 'Glu-43' of apo-SOD1 is required for this heterodimerization. Requires Cu(2+) as cofactor.

Its subcellular location is the cytoplasm. The protein resides in the mitochondrion intermembrane space. In terms of biological role, copper chaperone for apo superoxide dismutase 1 (SOD1). Binds copper ions and delivers them specifically to apo-SOD1. This is Superoxide dismutase 1 copper chaperone (CCS1) from Saccharomyces cerevisiae (strain ATCC 204508 / S288c) (Baker's yeast).